Reading from the N-terminus, the 268-residue chain is GTP cyclohydrolase FolE2 (268 aa).

It belongs to the GTP cyclohydrolase IV family.

It carries out the reaction GTP + H2O = 7,8-dihydroneopterin 3'-triphosphate + formate + H(+). Its pathway is cofactor biosynthesis; 7,8-dihydroneopterin triphosphate biosynthesis; 7,8-dihydroneopterin triphosphate from GTP: step 1/1. Converts GTP to 7,8-dihydroneopterin triphosphate. This is GTP cyclohydrolase FolE2 from Paraburkholderia xenovorans (strain LB400).